The primary structure comprises 484 residues: Poly(A) RNA polymerase GLD2 (484 aa).

Phosphoserine occurs at positions 62 and 69. The Nuclear localization signal motif lies at 76–92 (KRISDEKAFPLDGKRQR). The residue at position 95 (Ser95) is a Phosphoserine. Residues Asp213 and Asp215 each coordinate Mg(2+). The 55-residue stretch at 386–440 (SLGDLLLGFLKYYATEFDWNTQMISVREAKAIPRPDDMEWRNKYICVEEPFDGTN) folds into the PAP-associated domain.

It belongs to the DNA polymerase type-B-like family. GLD2 subfamily. Interacts with CPEB1, CPEB2, CPSF1 and PABPC1. Interacts with QKI isoform QKI7; promoting recruitment to miRNA miR-122 and miR-122 stabilization. The cofactor is Mg(2+). It depends on Mn(2+) as a cofactor. Ubiquitous. In brain, it is highly expressed in the cerebral cortex, cerebellum, hippocampus and olfactory bulb.

It is found in the cytoplasm. The protein localises to the nucleus. It carries out the reaction RNA(n) + ATP = RNA(n)-3'-adenine ribonucleotide + diphosphate. Cytoplasmic poly(A) RNA polymerase that adds successive AMP monomers to the 3'-end of specific RNAs, forming a poly(A) tail. In contrast to the canonical nuclear poly(A) RNA polymerase, it only adds poly(A) to selected cytoplasmic mRNAs. Does not play a role in replication-dependent histone mRNA degradation. Adds a single nucleotide to the 3' end of specific miRNAs, monoadenylation stabilizes and prolongs the activity of some but not all miRNAs. The polypeptide is Poly(A) RNA polymerase GLD2 (Tent2) (Mus musculus (Mouse)).